The chain runs to 409 residues: Phosphoglycerate kinase (409 aa).

Residues 22–24 (DLN), Arg-37, 60–63 (HLSR), Arg-122, and Arg-164 contribute to the substrate site. ATP contacts are provided by residues Lys-215, Glu-338, and 365–368 (GGDS).

The protein belongs to the phosphoglycerate kinase family. In terms of assembly, monomer.

The protein resides in the cytoplasm. The enzyme catalyses (2R)-3-phosphoglycerate + ATP = (2R)-3-phospho-glyceroyl phosphate + ADP. Its pathway is carbohydrate degradation; glycolysis; pyruvate from D-glyceraldehyde 3-phosphate: step 2/5. In Mycoplasma pneumoniae (strain ATCC 29342 / M129 / Subtype 1) (Mycoplasmoides pneumoniae), this protein is Phosphoglycerate kinase (pgk).